The following is a 364-amino-acid chain: Nucleosome assembly protein 1;2 (364 aa).

Residues 32 to 86 (VESIKNTLQGLAARHTDVLESLEPKVRKRVEVLREIQSQHDDLEAKFFEERAALE) are a coiled coil. The short motif at 53–68 (LEPKVRKRVEVLREIQ) is the Nuclear export signal element. Residues 227–232 (KKKPKK) carry the Nuclear localization signal motif. 2 disordered regions span residues 250-269 (FNFF…DEDT) and 301-364 (GEAA…CKQQ). Acidic residues-rich tracts occupy residues 259–269 (PDDDEEIDEDT) and 304–340 (AQDE…DDED). Residue Cys361 is modified to Cysteine methyl ester. Cys361 carries the S-farnesyl cysteine lipid modification. The propeptide at 362 to 364 (KQQ) is removed in mature form.

It belongs to the nucleosome assembly protein (NAP) family.

The protein localises to the nucleus. It localises to the cytoplasm. May modulate chromatin structure by regulation of nucleosome assembly/disassembly. This chain is Nucleosome assembly protein 1;2 (NAP1;2), found in Oryza sativa subsp. japonica (Rice).